The chain runs to 160 residues: Phosphopantetheine adenylyltransferase (160 aa).

Ser10 is a binding site for substrate. Residues 10–11 and His18 contribute to the ATP site; that span reads SF. Substrate is bound by residues Lys42, Leu74, and Arg88. ATP is bound by residues 89–91, Glu99, and 124–130; these read GLR and YSFLSSS.

Belongs to the bacterial CoaD family. In terms of assembly, homohexamer. Mg(2+) is required as a cofactor.

It localises to the cytoplasm. The catalysed reaction is (R)-4'-phosphopantetheine + ATP + H(+) = 3'-dephospho-CoA + diphosphate. It participates in cofactor biosynthesis; coenzyme A biosynthesis; CoA from (R)-pantothenate: step 4/5. In terms of biological role, reversibly transfers an adenylyl group from ATP to 4'-phosphopantetheine, yielding dephospho-CoA (dPCoA) and pyrophosphate. The polypeptide is Phosphopantetheine adenylyltransferase (Bacillus pumilus (strain SAFR-032)).